Consider the following 116-residue polypeptide: Cysteine-rich venom protein Cau1 (116 aa).

An SCP domain is found at 4–42 (SYAVVGHYTQIVWYKSDRIGCAAAYCPSSVYNYFYVCQY). Disulfide bonds link Cys24–Cys40, Cys62–Cys69, Cys65–Cys74, Cys87–Cys105, and Cys96–Cys109. The ShKT domain maps to 78 to 111 (CRVEDEFINCKDMAESRDCQDNYMMTNCAAFCSC).

Belongs to the CRISP family. Expressed by the venom gland.

The protein localises to the secreted. In terms of biological role, blocks contraction of smooth muscle elicited by high potassium-induced depolarization, but does not block caffeine-stimulated contraction. May target voltage-gated calcium channels on smooth muscle. The protein is Cysteine-rich venom protein Cau1 of Causus rhombeatus (Rhombic night adder).